The primary structure comprises 114 residues: Methylamine utilization protein MauL (114 aa).

It functions in the pathway one-carbon metabolism; methylamine degradation. Its function is as follows. Probably involved in TTQ prosthetic group biosynthesis. The chain is Methylamine utilization protein MauL (mauL) from Methylorubrum extorquens (strain ATCC 14718 / DSM 1338 / JCM 2805 / NCIMB 9133 / AM1) (Methylobacterium extorquens).